The sequence spans 450 residues: Divalent metal cation transporter MntH (450 aa).

Helical transmembrane passes span 34-54 (LSFLGPGLLVAGGYMDSGNWI), 59-81 (GGAQYGYTLLFGNLISRLSAMLL), 108-128 (IAIIFWIIAELAIIATDIAEV), 141-161 (IPLIVGALITVLDVFLLLFIM), 170-190 (AIVGTLIFTVLFIFIFEVYIS), 212-232 (GILYIALGIIGATIMPHNLYL), 263-283 (IQLSIAFVVNCLLLVLGASLF), 305-325 (PVLGATMGAIMSTLFAVALLA), 361-381 (SLAVIPVIVCLIIFKGNAAKI), 383-403 (QLLVFSQVFLSIALPFCLIPL), and 422-442 (VNIISWTLIIILSILNVYLIV).

Belongs to the NRAMP family.

The protein localises to the cell membrane. H(+)-stimulated, divalent metal cation uptake system. This Staphylococcus aureus (strain MRSA252) protein is Divalent metal cation transporter MntH.